A 498-amino-acid chain; its full sequence is Ammonium transporter 1 member 1 (498 aa).

The next 11 helical transmembrane spans lie at 39-59 (LLFSAYLVFAMQLGFAMLCAG), 74-94 (VLDAAAGALFYYLFGFAFAFG), 120-140 (FFLFQWAFAIAAAGITSGSIA), 148-168 (YLIYSAFLTGFVYPVVSHWIW), 192-212 (FAGSGVVHMVGGVAGLWGALI), 236-256 (LVVLGTFLLWFGWYGFNPGSF), 274-296 (SGVGRTAVTTTLAGSVAALTTLF), 307-327 (VVDVCNGLLGGFAAITAGCSV), 331-351 (WAAIICGFVSAWVLIGLNALA), 360-380 (LEAAQLHGGCGAWGILFTALF), and 411-431 (VIQILVIFGWVSCTMGPLFYG).

The protein belongs to the ammonia transporter channel (TC 1.A.11.2) family. In terms of tissue distribution, expressed in roots and shoots.

Its subcellular location is the membrane. Functionally, ammonium transporter probably involved in ammonium uptake from the soil. This Oryza sativa subsp. japonica (Rice) protein is Ammonium transporter 1 member 1 (AMT1-1).